Reading from the N-terminus, the 223-residue chain is Phosphoribosylformylglycinamidine synthase subunit PurQ (223 aa).

The Glutamine amidotransferase type-1 domain maps to 2-223 (KTAIIQLPGL…FQSALELAKG (222 aa)). The active-site Nucleophile is the Cys86. Catalysis depends on residues His196 and Glu198.

Part of the FGAM synthase complex composed of 1 PurL, 1 PurQ and 2 PurS subunits.

It is found in the cytoplasm. It carries out the reaction N(2)-formyl-N(1)-(5-phospho-beta-D-ribosyl)glycinamide + L-glutamine + ATP + H2O = 2-formamido-N(1)-(5-O-phospho-beta-D-ribosyl)acetamidine + L-glutamate + ADP + phosphate + H(+). It catalyses the reaction L-glutamine + H2O = L-glutamate + NH4(+). Its pathway is purine metabolism; IMP biosynthesis via de novo pathway; 5-amino-1-(5-phospho-D-ribosyl)imidazole from N(2)-formyl-N(1)-(5-phospho-D-ribosyl)glycinamide: step 1/2. Part of the phosphoribosylformylglycinamidine synthase complex involved in the purines biosynthetic pathway. Catalyzes the ATP-dependent conversion of formylglycinamide ribonucleotide (FGAR) and glutamine to yield formylglycinamidine ribonucleotide (FGAM) and glutamate. The FGAM synthase complex is composed of three subunits. PurQ produces an ammonia molecule by converting glutamine to glutamate. PurL transfers the ammonia molecule to FGAR to form FGAM in an ATP-dependent manner. PurS interacts with PurQ and PurL and is thought to assist in the transfer of the ammonia molecule from PurQ to PurL. In Bartonella henselae (strain ATCC 49882 / DSM 28221 / CCUG 30454 / Houston 1) (Rochalimaea henselae), this protein is Phosphoribosylformylglycinamidine synthase subunit PurQ.